The chain runs to 281 residues: Phosphatidylglycerol--prolipoprotein diacylglyceryl transferase (281 aa).

Helical transmembrane passes span F29–I49, L64–Y84, G100–W120, and L124–G144. R145 serves as a coordination point for a 1,2-diacyl-sn-glycero-3-phospho-(1'-sn-glycerol). 3 helical membrane passes run Q180–W200, G209–F229, and G248–T268.

The protein belongs to the Lgt family.

It localises to the cell inner membrane. The enzyme catalyses L-cysteinyl-[prolipoprotein] + a 1,2-diacyl-sn-glycero-3-phospho-(1'-sn-glycerol) = an S-1,2-diacyl-sn-glyceryl-L-cysteinyl-[prolipoprotein] + sn-glycerol 1-phosphate + H(+). The protein operates within protein modification; lipoprotein biosynthesis (diacylglyceryl transfer). Catalyzes the transfer of the diacylglyceryl group from phosphatidylglycerol to the sulfhydryl group of the N-terminal cysteine of a prolipoprotein, the first step in the formation of mature lipoproteins. The chain is Phosphatidylglycerol--prolipoprotein diacylglyceryl transferase from Erythrobacter litoralis (strain HTCC2594).